The following is a 450-amino-acid chain: uncharacterized protein (450 aa).

This sequence belongs to the ycf80 family.

Its subcellular location is the plastid. The protein resides in the chloroplast. This is an uncharacterized protein from Porphyra purpurea (Red seaweed).